The primary structure comprises 440 residues: Ribosomal protein uS12 methylthiotransferase RimO (440 aa).

In terms of domain architecture, MTTase N-terminal spans 8 to 125 (LRCHAISLGC…WNEQILLALN (118 aa)). The [4Fe-4S] cluster site is built by cysteine 17, cysteine 52, cysteine 87, cysteine 152, cysteine 156, and cysteine 159. Positions 138-368 (TTGKSYAWLK…MEIQLKISEK (231 aa)) constitute a Radical SAM core domain. The 69-residue stretch at 371 to 439 (KNFVGKRLSL…SYDLVALADS (69 aa)) folds into the TRAM domain.

The protein belongs to the methylthiotransferase family. RimO subfamily. [4Fe-4S] cluster is required as a cofactor.

It localises to the cytoplasm. It carries out the reaction L-aspartate(89)-[ribosomal protein uS12]-hydrogen + (sulfur carrier)-SH + AH2 + 2 S-adenosyl-L-methionine = 3-methylsulfanyl-L-aspartate(89)-[ribosomal protein uS12]-hydrogen + (sulfur carrier)-H + 5'-deoxyadenosine + L-methionine + A + S-adenosyl-L-homocysteine + 2 H(+). In terms of biological role, catalyzes the methylthiolation of an aspartic acid residue of ribosomal protein uS12. This chain is Ribosomal protein uS12 methylthiotransferase RimO, found in Lawsonia intracellularis (strain PHE/MN1-00).